A 247-amino-acid polypeptide reads, in one-letter code: Proteasome subunit alpha type-7-1 (247 aa).

It belongs to the peptidase T1A family. The 26S proteasome consists of a 20S proteasome core and two 19S regulatory subunits. The 20S proteasome core is composed of 28 subunits that are arranged in four stacked rings, resulting in a barrel-shaped structure. The two end rings are each formed by seven alpha subunits, and the two central rings are each formed by seven beta subunits. The catalytic chamber with the active sites is on the inside of the barrel.

The protein localises to the cytoplasm. The protein resides in the nucleus. The proteasome is a multicatalytic proteinase complex which is characterized by its ability to cleave peptides with Arg, Phe, Tyr, Leu, and Glu adjacent to the leaving group at neutral or slightly basic pH. The proteasome has an ATP-dependent proteolytic activity. In Drosophila virilis (Fruit fly), this protein is Proteasome subunit alpha type-7-1 (Pros28.1).